Here is a 563-residue protein sequence, read N- to C-terminus: GTPase Obg (563 aa).

The 167-residue stretch at 2-168 (SDFVDRVTVH…RDVILELKSI (167 aa)) folds into the Obg domain. Residues 169 to 349 (ADVALVGFPS…LNFALSALVH (181 aa)) enclose the OBG-type G domain. GTP-binding positions include 175–182 (GFPSAGKS), 200–204 (FTTLV), 221–224 (DVPG), 301–304 (NKID), and 330–332 (STA). The Mg(2+) site is built by serine 182 and threonine 202. Residues 383–469 (DEGGSALEFT…ARMVEFDWDP (87 aa)) form the OCT domain. A disordered region spans residues 529 to 563 (RKAGHWADPTVDDDRHDETSLFGHGESSEDGETEE).

This sequence belongs to the TRAFAC class OBG-HflX-like GTPase superfamily. OBG GTPase family. In terms of assembly, monomer. Mg(2+) is required as a cofactor.

The protein resides in the cytoplasm. Its function is as follows. An essential GTPase which binds GTP, GDP and possibly (p)ppGpp with moderate affinity, with high nucleotide exchange rates and a fairly low GTP hydrolysis rate. Plays a role in control of the cell cycle, stress response, ribosome biogenesis and in those bacteria that undergo differentiation, in morphogenesis control. This Bifidobacterium longum (strain DJO10A) protein is GTPase Obg.